The sequence spans 372 residues: Glutamate 5-kinase (372 aa).

Position 9 (lysine 9) interacts with ATP. Substrate-binding residues include serine 49, aspartate 136, and asparagine 148. ATP is bound by residues 168 to 169 (TD) and 210 to 216 (TGGMKSK). The region spanning 276 to 360 (EGKVFIDDGA…PAIEVIHRDS (85 aa)) is the PUA domain.

It belongs to the glutamate 5-kinase family.

It is found in the cytoplasm. It catalyses the reaction L-glutamate + ATP = L-glutamyl 5-phosphate + ADP. Its pathway is amino-acid biosynthesis; L-proline biosynthesis; L-glutamate 5-semialdehyde from L-glutamate: step 1/2. Its function is as follows. Catalyzes the transfer of a phosphate group to glutamate to form L-glutamate 5-phosphate. This is Glutamate 5-kinase from Oceanobacillus iheyensis (strain DSM 14371 / CIP 107618 / JCM 11309 / KCTC 3954 / HTE831).